The sequence spans 151 residues: Ribonuclease H (151 aa).

Residues Met1 to Gln143 enclose the RNase H type-1 domain. Mg(2+) is bound by residues Asp10, Glu49, Asp71, and Asp135.

The protein belongs to the RNase H family. In terms of assembly, monomer. The cofactor is Mg(2+).

Its subcellular location is the cytoplasm. It catalyses the reaction Endonucleolytic cleavage to 5'-phosphomonoester.. Endonuclease that specifically degrades the RNA of RNA-DNA hybrids. The polypeptide is Ribonuclease H (Mycolicibacterium gilvum (strain PYR-GCK) (Mycobacterium gilvum (strain PYR-GCK))).